A 452-amino-acid chain; its full sequence is Trigger factor (452 aa).

In terms of domain architecture, PPIase FKBP-type spans Asn-170–Pro-256.

The protein belongs to the FKBP-type PPIase family. Tig subfamily.

Its subcellular location is the cytoplasm. The enzyme catalyses [protein]-peptidylproline (omega=180) = [protein]-peptidylproline (omega=0). Its function is as follows. Involved in protein export. Acts as a chaperone by maintaining the newly synthesized protein in an open conformation. Functions as a peptidyl-prolyl cis-trans isomerase. The chain is Trigger factor from Borrelia garinii subsp. bavariensis (strain ATCC BAA-2496 / DSM 23469 / PBi) (Borreliella bavariensis).